The sequence spans 99 residues: Nucleoid-associated protein SPy_1862/M5005_Spy1580 (99 aa).

Belongs to the YbaB/EbfC family. Homodimer.

It is found in the cytoplasm. Its subcellular location is the nucleoid. Functionally, binds to DNA and alters its conformation. May be involved in regulation of gene expression, nucleoid organization and DNA protection. The polypeptide is Nucleoid-associated protein SPy_1862/M5005_Spy1580 (Streptococcus pyogenes serotype M1).